The primary structure comprises 295 residues: tRNA pseudouridine synthase B (295 aa).

The active-site Nucleophile is Asp42.

It belongs to the pseudouridine synthase TruB family. Type 1 subfamily.

The enzyme catalyses uridine(55) in tRNA = pseudouridine(55) in tRNA. Its function is as follows. Responsible for synthesis of pseudouridine from uracil-55 in the psi GC loop of transfer RNAs. This chain is tRNA pseudouridine synthase B, found in Cutibacterium acnes (strain DSM 16379 / KPA171202) (Propionibacterium acnes).